Consider the following 85-residue polypeptide: Protein RnfH (85 aa).

Belongs to the UPF0125 (RnfH) family.

In Cereibacter sphaeroides (strain ATCC 17029 / ATH 2.4.9) (Rhodobacter sphaeroides), this protein is Protein RnfH.